A 283-amino-acid polypeptide reads, in one-letter code: Protein MGARP (283 aa).

The interval 1 to 36 (MYLRRAVSKTLALPRRAPPGPAPLGKDASLRRMSSR) is disordered. At 1-41 (MYLRRAVSKTLALPRRAPPGPAPLGKDASLRRMSSRKFPGT) the chain is on the cytoplasmic side. The helical; Anchor for type IV membrane protein transmembrane segment at 42–64 (SGSNMIYYLVVGVTVSAGGYYTY) threads the bilayer. Topologically, residues 65-283 (KALTSKQVRR…VTEETASPQG (219 aa)) are mitochondrial intermembrane. Disordered regions lie at residues 78–101 (VAEP…EHVA) and 118–283 (AESV…SPQG). The segment covering 128 to 160 (EAAVVLPEESQASAPSEVPAEAAVVEASLSSSE) has biased composition (low complexity). 2 stretches are compositionally biased toward polar residues: residues 171–184 (VETT…TQEV) and 199–220 (ADTS…QEGA). The segment covering 221-245 (DTTKEEADNSKEAEGTTTEDPRSIS) has biased composition (basic and acidic residues).

In terms of assembly, interacts with RHOT1/Miro-1, RHOT2/Miro-2, TRAK1/OIP106 and TRAK2/GRIF1. Expressed in the ovary, testis, brain, adrenal glands and the compartments of the visual nervous system. Expressed in corneal endothelium (CE) (at protein level). Expressed in steroidogenic tissues with the highest level of expression observed in the adrenal gland. Weakly expressed in placenta. Weakly expressed in astrocytes and neurons under normoxia. Strongly expressed in astrocytes and neurons under hypoxia. Expressed in each layer of the retina, with particularly higher staining in the inner segment of the photoreceptor (IS), the outer plexiform layer (OPL) and the ganglion cell layer (GCL).

The protein localises to the mitochondrion. It is found in the mitochondrion outer membrane. It localises to the mitochondrion inner membrane. In terms of biological role, plays a role in the trafficking of mitochondria along microtubules. Regulates the kinesin-mediated axonal transport of mitochondria to nerve terminals along microtubules during hypoxia. Participates in the translocation of TRAK2/GRIF1 from the cytoplasm to the mitochondrion. Also plays a role in steroidogenesis through maintenance of mitochondrial abundance and morphology. Plays an inhibitory role during neocortex development by regulating mitochondrial morphology, distribution and motility in neocortical neurons. In Mus musculus (Mouse), this protein is Protein MGARP (Mgarp).